Consider the following 327-residue polypeptide: Flotillin-like protein FloA (327 aa).

A run of 2 helical transmembrane segments spans residues Val-8 to Ile-28 and Pro-29 to Met-49.

It belongs to the flotillin-like FloA family. As to quaternary structure, homooligomerizes.

Its subcellular location is the cell membrane. The protein resides in the membrane raft. Functionally, found in functional membrane microdomains (FMM) that may be equivalent to eukaryotic membrane rafts. FMMs are highly dynamic and increase in number as cells age. Flotillins are thought to be important factors in membrane fluidity. The sequence is that of Flotillin-like protein FloA from Exiguobacterium sibiricum (strain DSM 17290 / CCUG 55495 / CIP 109462 / JCM 13490 / 255-15).